A 1711-amino-acid polypeptide reads, in one-letter code: Nuclear pore complex protein Nup214 (1711 aa).

Repeat copies occupy residues 472–473 (FG), 486–487 (FG), 497–498 (FG), 511–512 (FG), 514–515 (FG), 535–536 (FG), 588–589 (TS), and 598–599 (SL). The tract at residues 472–1703 (FGAAAAKAPA…NSNAQKPAFG (1232 aa)) is 45 X 2 AA repeats of F-G. Leucine-zipper stretches follow at residues 650 to 672 (LDDLQELNEQAKDVEFELDVQGL) and 767 to 788 (LTRLQNLTSNQRIVQNNIKSKL). Positions 886-905 (KPATANKYTQAAVAPPSPPD) are disordered. Copy 9 of the repeat occupies 1009–1010 (FG). The interval 1012–1081 (GSPAVAAPTP…NKSFGFGGFT (70 aa)) is disordered. Composition is skewed to basic and acidic residues over residues 1037 to 1051 (TKPKEQKAAESKEFK) and 1058 to 1072 (EESKVPQKPKAETEN). The tract at residues 1044–1711 (AAESKEFKAV…FGGSSFMNYR (668 aa)) is interaction with emb. Tandem repeats lie at residues 1075–1076 (FG), 1077–1078 (FG), 1097–1098 (FG), 1106–1107 (FG), 1135–1136 (FG), 1218–1219 (FG), 1229–1230 (FG), and 1240–1241 (FG). Over residues 1251-1261 (TSVTEANNKTD) the composition is skewed to polar residues. Residues 1251 to 1270 (TSVTEANNKTDPISTTPSAI) form a disordered region. A run of 27 repeats spans residues 1356-1357 (FG), 1388-1389 (FG), 1399-1400 (FG), 1434-1435 (FG), 1449-1450 (FG), 1458-1459 (FG), 1472-1473 (FG), 1481-1482 (FG), 1487-1488 (FG), 1507-1508 (FG), 1512-1513 (FG), 1539-1540 (FG), 1547-1548 (FG), 1562-1563 (FG), 1571-1572 (FG), 1584-1585 (FG), 1588-1589 (FG), 1601-1602 (FG), 1617-1618 (FG), 1623-1624 (FG), 1629-1630 (FG), 1635-1636 (FG), 1641-1642 (FG), 1647-1648 (FG), 1650-1651 (FG), 1662-1663 (FG), and 1686-1687 (FG). Disordered regions lie at residues 1533 to 1552 (SPQASPFGGGGNSIFGSPAT) and 1557 to 1614 (SGGS…TTTP). Composition is skewed to gly residues over residues 1560–1572 (SIFGGGSSSGGFG) and 1582–1595 (GGFGGGFGQGGGGS). Residues 1596–1614 (VAQTGFGSPQAPQQQTTTP) show a composition bias toward low complexity. Polar residues predominate over residues 1688 to 1698 (NLAQTGNSNAQ). The disordered stretch occupies residues 1688 to 1711 (NLAQTGNSNAQKPAFGGSSFMNYR). Repeat unit 45 spans residues 1702 to 1703 (FG).

In terms of assembly, component of the nuclear pore complex. Interacts with mbo/Nup88 and (via C-terminus) with emb to attenuate emb-mediated protein export.

It is found in the nucleus. It localises to the nuclear pore complex. Its subcellular location is the nucleus membrane. Functionally, part of the nuclear pore complex. Serves as a docking site in the receptor-mediated import of substrates across the nuclear pore complex including emb, RanGAP and phosphorylated Mad. Protects mbo/Nup88 from proteasomal degradation at the nuclear pore. Together with mbo/Nup88, sequesters emb in the cytoplasm and thereby attenuates nuclear export signal (NES)-mediated nuclear export. Together with mbo/Nup88, required for the nuclear import of the Rel family transcription factors dorsal (dl) and Dorsal-related immunity factor (Dif) and the activation of an immune response. This chain is Nuclear pore complex protein Nup214, found in Drosophila melanogaster (Fruit fly).